The sequence spans 593 residues: Isocitrate dehydrogenase kinase/phosphatase (593 aa).

ATP is bound by residues 324–330 (APGIRGL) and lysine 345. Residue aspartate 380 is part of the active site.

It belongs to the AceK family.

It localises to the cytoplasm. It carries out the reaction L-seryl-[isocitrate dehydrogenase] + ATP = O-phospho-L-seryl-[isocitrate dehydrogenase] + ADP + H(+). In terms of biological role, bifunctional enzyme which can phosphorylate or dephosphorylate isocitrate dehydrogenase (IDH) on a specific serine residue. This is a regulatory mechanism which enables bacteria to bypass the Krebs cycle via the glyoxylate shunt in response to the source of carbon. When bacteria are grown on glucose, IDH is fully active and unphosphorylated, but when grown on acetate or ethanol, the activity of IDH declines drastically concomitant with its phosphorylation. The chain is Isocitrate dehydrogenase kinase/phosphatase from Dechloromonas aromatica (strain RCB).